Reading from the N-terminus, the 141-residue chain is Large ribosomal subunit protein bL17 (141 aa).

This sequence belongs to the bacterial ribosomal protein bL17 family. In terms of assembly, part of the 50S ribosomal subunit. Contacts protein L32.

This is Large ribosomal subunit protein bL17 from Allorhizobium ampelinum (strain ATCC BAA-846 / DSM 112012 / S4) (Agrobacterium vitis (strain S4)).